The following is a 78-amino-acid chain: Musculoskeletal embryonic nuclear protein 1 (78 aa).

2 disordered regions span residues 1 to 33 and 45 to 78; these read MSQP…QEIK and QMGS…SVFG. The Nuclear localization signal motif lies at 6–14; the sequence is PVKKKRPPV. The span at 64–78 shows a compositional bias: basic and acidic residues; that stretch reads VFEKSKDEPPKSVFG.

This sequence belongs to the MUSTN1 family. As to expression, predominantly expressed in heart and skeletal muscle. Detected in skeletal muscle satellite cells where expression increases with cell proliferation.

Its subcellular location is the nucleus. Its function is as follows. Promotes the differentiation and proliferation of skeletal muscle satellite cells. The polypeptide is Musculoskeletal embryonic nuclear protein 1 (MUSTN1) (Gallus gallus (Chicken)).